Consider the following 316-residue polypeptide: Lipoyl synthase (316 aa).

The [4Fe-4S] cluster site is built by Cys-66, Cys-71, Cys-77, Cys-92, Cys-96, Cys-99, and Ser-306. The 218-residue stretch at 78 to 295 (YSQQTATFMV…ADIAKSMGFK (218 aa)) folds into the Radical SAM core domain.

Belongs to the radical SAM superfamily. Lipoyl synthase family. The cofactor is [4Fe-4S] cluster.

Its subcellular location is the cytoplasm. The catalysed reaction is [[Fe-S] cluster scaffold protein carrying a second [4Fe-4S](2+) cluster] + N(6)-octanoyl-L-lysyl-[protein] + 2 oxidized [2Fe-2S]-[ferredoxin] + 2 S-adenosyl-L-methionine + 4 H(+) = [[Fe-S] cluster scaffold protein] + N(6)-[(R)-dihydrolipoyl]-L-lysyl-[protein] + 4 Fe(3+) + 2 hydrogen sulfide + 2 5'-deoxyadenosine + 2 L-methionine + 2 reduced [2Fe-2S]-[ferredoxin]. It functions in the pathway protein modification; protein lipoylation via endogenous pathway; protein N(6)-(lipoyl)lysine from octanoyl-[acyl-carrier-protein]: step 2/2. Its function is as follows. Catalyzes the radical-mediated insertion of two sulfur atoms into the C-6 and C-8 positions of the octanoyl moiety bound to the lipoyl domains of lipoate-dependent enzymes, thereby converting the octanoylated domains into lipoylated derivatives. The chain is Lipoyl synthase from Rhodopirellula baltica (strain DSM 10527 / NCIMB 13988 / SH1).